The chain runs to 691 residues: Seven transmembrane domain-containing tyrosine-protein kinase 1 (691 aa).

The Extracellular portion of the chain corresponds to 1-33 (MDTSCVSINQCGFCTYLFNRSIPLAGEGDGAIM). A helical transmembrane segment spans residues 34–54 (FNTMVDSMALGYIFSALYLLF). The Cytoplasmic segment spans residues 55 to 126 (RLQRSYTYLQ…PRIINSTYFK (72 aa)). The chain crosses the membrane as a helical span at residues 127-144 (YTLFVSLWLAFEGLLLLF). At 145 to 153 (LPPNSLAYP) the chain is on the extracellular side. A helical membrane pass occupies residues 154 to 176 (AFVIIVGTGHIVTDNWVLVFLYG). Topologically, residues 177 to 186 (KEDDRFSARR) are cytoplasmic. Residues 187-207 (SFYSCTLLYLIICCTTLASFF) form a helical membrane-spanning segment. The Extracellular portion of the chain corresponds to 208-227 (DDQTMCKKNDCQTFMFQDEY). Residues 228 to 248 (TSLAITVASLVVYTIVLGMTI) form a helical membrane-spanning segment. Residues 249 to 258 (KRSFLRPTGR) are Cytoplasmic-facing. The chain crosses the membrane as a helical span at residues 259–279 (IWLLFLMGYNCISSVGALLNI). Over 280 to 284 (LDVDA) the chain is Extracellular. A helical transmembrane segment spans residues 285-305 (GYCFLGIAAIIYSFSYGPLLF). The Cytoplasmic segment spans residues 306–691 (RTCGNDTNLL…GAEEFHYIDG (386 aa)). The Protein kinase domain occupies 363–634 (FKFGQVIGEG…ANVPISNTYV (272 aa)). ATP-binding positions include 369-377 (IGEGYFGEV) and Lys-390. Asp-493 acts as the Proton acceptor in catalysis.

This sequence belongs to the protein kinase superfamily. TKL Tyr protein kinase family.

The protein localises to the membrane. The catalysed reaction is L-tyrosyl-[protein] + ATP = O-phospho-L-tyrosyl-[protein] + ADP + H(+). This Dictyostelium discoideum (Social amoeba) protein is Seven transmembrane domain-containing tyrosine-protein kinase 1 (7tmk1).